We begin with the raw amino-acid sequence, 743 residues long: Phosphoribosylformylglycinamidine synthase subunit PurL (743 aa).

The active site involves His-50. ATP-binding residues include Tyr-53 and Lys-92. Mg(2+) is bound at residue Glu-94. Substrate-binding positions include 95–98 (SHNH) and Arg-117. His-96 serves as the catalytic Proton acceptor. Asp-118 is a binding site for Mg(2+). Residue Gln-241 coordinates substrate. Asp-269 contributes to the Mg(2+) binding site. 313–315 (ESQ) lines the substrate pocket. ATP-binding residues include Asp-495 and Gly-532. A Mg(2+)-binding site is contributed by Asn-533. Ser-535 is a substrate binding site.

Belongs to the FGAMS family. In terms of assembly, monomer. Part of the FGAM synthase complex composed of 1 PurL, 1 PurQ and 2 PurS subunits.

The protein resides in the cytoplasm. The catalysed reaction is N(2)-formyl-N(1)-(5-phospho-beta-D-ribosyl)glycinamide + L-glutamine + ATP + H2O = 2-formamido-N(1)-(5-O-phospho-beta-D-ribosyl)acetamidine + L-glutamate + ADP + phosphate + H(+). Its pathway is purine metabolism; IMP biosynthesis via de novo pathway; 5-amino-1-(5-phospho-D-ribosyl)imidazole from N(2)-formyl-N(1)-(5-phospho-D-ribosyl)glycinamide: step 1/2. In terms of biological role, part of the phosphoribosylformylglycinamidine synthase complex involved in the purines biosynthetic pathway. Catalyzes the ATP-dependent conversion of formylglycinamide ribonucleotide (FGAR) and glutamine to yield formylglycinamidine ribonucleotide (FGAM) and glutamate. The FGAM synthase complex is composed of three subunits. PurQ produces an ammonia molecule by converting glutamine to glutamate. PurL transfers the ammonia molecule to FGAR to form FGAM in an ATP-dependent manner. PurS interacts with PurQ and PurL and is thought to assist in the transfer of the ammonia molecule from PurQ to PurL. This is Phosphoribosylformylglycinamidine synthase subunit PurL from Rhizobium etli (strain CIAT 652).